The sequence spans 2200 residues: Non-reducing polyketide synthase tpeB (2200 aa).

The 240-residue stretch at 16–255 (FFGDQTVDTL…MDLPLGTPAH (240 aa)) folds into the Starter acyltransferase (SAT) domain. A Ketosynthase family 3 (KS3) domain is found at 382–815 (SNMIAIVGQS…GGNNCVLLEE (434 aa)). Residues Cys554, His690, and His729 each act as for beta-ketoacyl synthase activity in the active site. Residues 914-1202 (VFAFTGQGSQ…VLNSFIKATL (289 aa)) form the Malonyl-CoA:ACP transacylase (MAT) domain. The tract at residues 1296–1621 (TASLQRVREE…TKRILTTILG (326 aa)) is product template (PT) domain. Residues 1300–1433 (QRVREERIQG…CKIRFESKAD (134 aa)) are N-terminal hotdog fold. Positions 1300–1617 (QRVREERIQG…FQRLTKRILT (318 aa)) constitute a PKS/mFAS DH domain. His1332 serves as the catalytic Proton acceptor; for dehydratase activity. Residues 1462–1617 (NGHKLPKPVV…FQRLTKRILT (156 aa)) are C-terminal hotdog fold. Residue Asp1522 is the Proton donor; for dehydratase activity of the active site. The interval 1625-1652 (DHHNSNEVRNGNATTTHTNPPAHATTQS) is disordered. Residues 1636 to 1650 (NATTTHTNPPAHATT) show a composition bias toward low complexity. Carrier domains are found at residues 1671–1748 (TVGE…AELP) and 1791–1865 (ANYA…GPNT). O-(pantetheine 4'-phosphoryl)serine is present on residues Ser1708 and Ser1825. Residues 1931-2173 (MFFLPDGTGY…TVPCDHLSIM (243 aa)) are thioesterase (TE) domain.

Pantetheine 4'-phosphate serves as cofactor.

It functions in the pathway secondary metabolite biosynthesis. Its function is as follows. Non-reducing polyketide synthase; part of the gene cluster that mediates the biosynthesis of polyesters containing 2,4-dihydroxy-6-(2-hydroxypropyl)benzoate and 3-hydroxybutyrate moieties, such as talapolyester G, 15G256beta and 15G256beta-2; as well as to oxidized derivatives such as 15G256alpha. The biosynthesis of the polyesters probably starts with the formation of the diketide 3-hydroxybutyryl-S-ACP catalyzed by the partially reducing polyketide synthase tpeA. The acceptance of 3-hydroxybutyryl by the non-reducing polyketide synthase tpeB would initiate further elongation and cyclization, catalyzed by KS and PT, respectively, to form 2,4-dihydroxy-6-(2-hydroxyn-propyl)benzoyl-S-ACP intermediate. The TE domain could catalyze lactonization at this step to yield 6-hydroxymellein as a derailment product. The polyesterification process maybe occurs when additional molecules of 3-hydroxybutyryl are transferred to tpeB. Following the first esterification step, an intramolecular cyclization catalyzed by the TE domain of tpeB would give talarodioxadione 1, whereas the ethyl esterification of talapolyester G perhaps happens spontaneously. Further oxidation by the cytochrome P450 monooxygenase tpeC then leads to the formation of oxidized derivatives. The chain is Non-reducing polyketide synthase tpeB from Talaromyces stipitatus (strain ATCC 10500 / CBS 375.48 / QM 6759 / NRRL 1006) (Penicillium stipitatum).